We begin with the raw amino-acid sequence, 175 residues long: Coagulogen (175 aa).

Intrachain disulfides connect C8–C167, C10–C95, C60–C161, C65–C121, C75–C168, C88–C140, C127–C170, and C134–C172.

This sequence belongs to the coagulin family. In terms of assembly, coagulogen is cleaved after Arg-18 and Arg-46 by a clotting enzyme contained in the hemocyte and activated by a bacterial endotoxin (lipopolysaccharide). This cleavage releases the peptide C and leaves 2 chains of coagulin, A and B, linked by two disulfide bonds. Coagulin molecules interlink to form a gel. As to expression, hemolymph.

The protein localises to the secreted. In terms of biological role, coagulogen is a gel-forming protein of hemolymph; it hinders the spread of invaders by immobilizing them. This Carcinoscorpius rotundicauda (Mangrove horseshoe crab) protein is Coagulogen.